Here is a 333-residue protein sequence, read N- to C-terminus: Holliday junction branch migration complex subunit RuvB (333 aa).

Positions Met1–Tyr182 are large ATPase domain (RuvB-L). Residues Ile21, Arg22, Gly63, Lys66, Thr67, Thr68, Glu129–Tyr131, Arg172, Tyr182, and Arg219 contribute to the ATP site. A Mg(2+)-binding site is contributed by Thr67. The small ATPAse domain (RuvB-S) stretch occupies residues Asn183–Gln253. The head domain (RuvB-H) stretch occupies residues Arg256–Lys333. The DNA site is built by Arg311 and Arg316.

The protein belongs to the RuvB family. In terms of assembly, homohexamer. Forms an RuvA(8)-RuvB(12)-Holliday junction (HJ) complex. HJ DNA is sandwiched between 2 RuvA tetramers; dsDNA enters through RuvA and exits via RuvB. An RuvB hexamer assembles on each DNA strand where it exits the tetramer. Each RuvB hexamer is contacted by two RuvA subunits (via domain III) on 2 adjacent RuvB subunits; this complex drives branch migration. In the full resolvosome a probable DNA-RuvA(4)-RuvB(12)-RuvC(2) complex forms which resolves the HJ.

The protein resides in the cytoplasm. The catalysed reaction is ATP + H2O = ADP + phosphate + H(+). In terms of biological role, the RuvA-RuvB-RuvC complex processes Holliday junction (HJ) DNA during genetic recombination and DNA repair, while the RuvA-RuvB complex plays an important role in the rescue of blocked DNA replication forks via replication fork reversal (RFR). RuvA specifically binds to HJ cruciform DNA, conferring on it an open structure. The RuvB hexamer acts as an ATP-dependent pump, pulling dsDNA into and through the RuvAB complex. RuvB forms 2 homohexamers on either side of HJ DNA bound by 1 or 2 RuvA tetramers; 4 subunits per hexamer contact DNA at a time. Coordinated motions by a converter formed by DNA-disengaged RuvB subunits stimulates ATP hydrolysis and nucleotide exchange. Immobilization of the converter enables RuvB to convert the ATP-contained energy into a lever motion, pulling 2 nucleotides of DNA out of the RuvA tetramer per ATP hydrolyzed, thus driving DNA branch migration. The RuvB motors rotate together with the DNA substrate, which together with the progressing nucleotide cycle form the mechanistic basis for DNA recombination by continuous HJ branch migration. Branch migration allows RuvC to scan DNA until it finds its consensus sequence, where it cleaves and resolves cruciform DNA. This is Holliday junction branch migration complex subunit RuvB from Halalkalibacterium halodurans (strain ATCC BAA-125 / DSM 18197 / FERM 7344 / JCM 9153 / C-125) (Bacillus halodurans).